The chain runs to 910 residues: Coatomer subunit beta'-2 (910 aa).

9 WD repeats span residues 13-52 (QRSE…MVKS), 55-94 (VTEL…KVKV), 97-136 (AHTD…MCTQ), 140-180 (GHSH…PNFT), 183-224 (GHSK…CVQT), 227-266 (GHAH…LENT), 269-309 (YGLE…ASMD), 351-393 (TCDL…GSAL), and 461-501 (RIDV…SHLD). Positions 882-910 (ADGSTDGAVLVNGNDTEEQWGTNNEESSA) are disordered. Positions 900 to 910 (QWGTNNEESSA) are enriched in polar residues.

It belongs to the WD repeat COPB2 family. In terms of assembly, oligomeric complex that consists of at least the alpha, beta, beta', gamma, delta, epsilon and zeta subunits.

It is found in the cytoplasm. Its subcellular location is the golgi apparatus membrane. The protein resides in the cytoplasmic vesicle. It localises to the COPI-coated vesicle membrane. Functionally, the coatomer is a cytosolic protein complex that binds to dilysine motifs and reversibly associates with Golgi non-clathrin-coated vesicles, which further mediate biosynthetic protein transport from the ER, via the Golgi up to the trans Golgi network. Coatomer complex is required for budding from Golgi membranes, and is essential for the retrograde Golgi-to-ER transport of dilysine-tagged proteins. This chain is Coatomer subunit beta'-2, found in Oryza sativa subsp. japonica (Rice).